Reading from the N-terminus, the 377-residue chain is Glutamate 5-kinase (377 aa).

Residue K22 coordinates ATP. Substrate-binding residues include S62, D149, and N161. ATP is bound by residues 181-182 (TD) and 223-229 (TGGMVTK). Positions 285–359 (QGTLVADSGA…GRNTAQLKRF (75 aa)) constitute a PUA domain.

Belongs to the glutamate 5-kinase family.

It is found in the cytoplasm. It carries out the reaction L-glutamate + ATP = L-glutamyl 5-phosphate + ADP. It functions in the pathway amino-acid biosynthesis; L-proline biosynthesis; L-glutamate 5-semialdehyde from L-glutamate: step 1/2. Functionally, catalyzes the transfer of a phosphate group to glutamate to form L-glutamate 5-phosphate. This chain is Glutamate 5-kinase, found in Bifidobacterium adolescentis (strain ATCC 15703 / DSM 20083 / NCTC 11814 / E194a).